Here is a 944-residue protein sequence, read N- to C-terminus: Protein unc-45 homolog A (944 aa).

The tract at residues 1 to 25 (MTVSGPGTPEPRPSDPGASSAEELR) is disordered. TPR repeat units lie at residues 21-54 (AEEL…GATP), 58-91 (AILH…DGGD), and 92-125 (VKAL…EPKN). Lys-70 is modified (N6-acetyllysine). N6-acetyllysine is present on Lys-483.

As to quaternary structure, interacts with PGR isoforms A and B as well as with NR3C1 in the absence of ligand, and with HSP90AB1. Binding to HSP90AB1 involves 2 UNC45A monomers per HSP90AB1 dimer.

The protein resides in the cytoplasm. It localises to the perinuclear region. Its subcellular location is the nucleus. In terms of biological role, may act as co-chaperone for HSP90 (Potential). Prevents the stimulation of HSP90AB1 ATPase activity by AHSA1. Positive factor in promoting PGR function in the cell. May be necessary for proper folding of myosin (Potential). Necessary for normal cell proliferation. Necessary for normal myotube formation and myosin accumulation during muscle cell development. May play a role in erythropoiesis in stroma cells in the spleen. In Rattus norvegicus (Rat), this protein is Protein unc-45 homolog A (Unc45a).